A 335-amino-acid polypeptide reads, in one-letter code: Protein MET1, chloroplastic (335 aa).

Low complexity predominate over residues 1 to 18 (MSLAPSSYPSLYSSPSLP). 2 disordered regions span residues 1 to 29 (MSLA…NPSL) and 66 to 88 (SETE…KYET). A chloroplast-targeting transit peptide spans 1 to 73 (MSLAPSSYPS…KASETESSAK (73 aa)). The span at 19 to 29 (RTQQTKQNPSL) shows a compositional bias: polar residues. Residues 78-88 (GDGEEEEKYET) show a composition bias toward acidic residues. One can recognise a PDZ domain in the interval 97–136 (YGLKFRKGRDGGTYIDAILPGGSADKTGKFTVGDRVIATS). TPR repeat units follow at residues 217 to 250 (REKD…KPTP), 254 to 287 (SVAS…GYED), and 289 to 323 (KRIR…ESAI).

Interacts directly with stromal loops of photosystem II (PSII) core components psbB (CP47) and psbC (CP43). Associates with PSII subcomplexes formed during the PSII repair cycle (e.g. PSII dimers, PSII monomers, CP43-less PSII monomerand PSII reaction centers). Post-translationally, phosphorylated rapidly (e.g. within 5 minutes) but transiently at threonine and serine residues after wounding. In terms of tissue distribution, expressed in leaves (at protein level). Mostly expressed in leaves, stems and siliques, and, to a lower extent, in flowers and senescent leaves, but not present in roots (at protein level).

Its subcellular location is the plastid. The protein resides in the chloroplast membrane. It is found in the chloroplast thylakoid membrane. Its function is as follows. Involved in photosystem II supercomplex formation and repair, probably acting as a psbB/psbC chaperone on the stromal side of the membrane. The chain is Protein MET1, chloroplastic from Arabidopsis thaliana (Mouse-ear cress).